The chain runs to 473 residues: Iron transporter SMF3 (473 aa).

2 helical membrane-spanning segments follow: residues 14–34 (FIGP…YATS) and 44–64 (TLLF…CLCV). Residue N87 is glycosylated (N-linked (GlcNAc...) asparagine). 9 helical membrane passes run 97–117 (AIIA…QILF), 119–139 (IPLT…LMFY), 152–172 (FEFG…LELF), 198–218 (ALYI…LYLG), 257–277 (LIIS…IVAG), 297–317 (LLVH…MLCS), 352–372 (LIAI…GISD), 373–393 (ILNF…APLI), and 448–468 (VFVW…YLLG).

The protein belongs to the NRAMP family.

The protein localises to the vacuole membrane. It localises to the endoplasmic reticulum membrane. Has a role in controlling the cellular iron ion levels. Mobilizes vacuolar stores of iron in conditions of low iron levels. The polypeptide is Iron transporter SMF3 (SMF3) (Saccharomyces cerevisiae (strain ATCC 204508 / S288c) (Baker's yeast)).